The primary structure comprises 201 residues: Recombination protein RecR (201 aa).

Residues C60–C75 form a C4-type zinc finger. One can recognise a Toprim domain in the interval S83–P177.

It belongs to the RecR family.

Functionally, may play a role in DNA repair. It seems to be involved in an RecBC-independent recombinational process of DNA repair. It may act with RecF and RecO. The polypeptide is Recombination protein RecR (Francisella philomiragia subsp. philomiragia (strain ATCC 25017 / CCUG 19701 / FSC 153 / O#319-036)).